Reading from the N-terminus, the 283-residue chain is Cilia- and flagella-associated protein 77 (283 aa).

The disordered stretch occupies residues 151–170 (DQEDRRQKEPPPIPPNMTFG).

It belongs to the CFAP77 family. Microtubule inner protein component of sperm flagellar doublet microtubules.

The protein localises to the cytoplasm. It localises to the cytoskeleton. The protein resides in the cilium axoneme. It is found in the flagellum axoneme. Functionally, microtubule inner protein (MIP) part of the dynein-decorated doublet microtubules (DMTs) in cilia axoneme, which is required for motile cilia beating. In Mus musculus (Mouse), this protein is Cilia- and flagella-associated protein 77.